Here is a 375-residue protein sequence, read N- to C-terminus: Putative glutamate--cysteine ligase 2 (375 aa).

It belongs to the glutamate--cysteine ligase type 2 family. YbdK subfamily.

It catalyses the reaction L-cysteine + L-glutamate + ATP = gamma-L-glutamyl-L-cysteine + ADP + phosphate + H(+). Functionally, ATP-dependent carboxylate-amine ligase which exhibits weak glutamate--cysteine ligase activity. This chain is Putative glutamate--cysteine ligase 2, found in Sorangium cellulosum (strain So ce56) (Polyangium cellulosum (strain So ce56)).